The sequence spans 240 residues: uncharacterized protein (240 aa).

The interval 26-52 (DYVDDGESLPTRQSVKNQREQKKKQGK) is disordered. A helical transmembrane segment spans residues 57–77 (LFTVLAVIFVFVPVIVLVTLF). Residues 100–185 (KYEVVPKSED…QPAEPVQNVP (86 aa)) form a disordered region. A compositionally biased stretch (basic and acidic residues) spans 103 to 159 (VVPKSEDKNDTADTKETALQKESKKEPEDSKPKEQTAADKKQTAVAEKEDSPNKEEA). Residues 160–185 (TAAAASSSQSTVQQQEQPAEPVQNVP) are compositionally biased toward low complexity. A LysM domain is found at 189–235 (VKHTVQKKETLYRISMKYYKSRTGEEKIRAYNHLNGNDVYTGQVLDI).

It localises to the membrane. This is an uncharacterized protein from Bacillus subtilis (strain 168).